The primary structure comprises 307 residues: Methionyl-tRNA formyltransferase (307 aa).

Ser-108–Pro-111 is a binding site for (6S)-5,6,7,8-tetrahydrofolate.

This sequence belongs to the Fmt family.

The catalysed reaction is L-methionyl-tRNA(fMet) + (6R)-10-formyltetrahydrofolate = N-formyl-L-methionyl-tRNA(fMet) + (6S)-5,6,7,8-tetrahydrofolate + H(+). Attaches a formyl group to the free amino group of methionyl-tRNA(fMet). The formyl group appears to play a dual role in the initiator identity of N-formylmethionyl-tRNA by promoting its recognition by IF2 and preventing the misappropriation of this tRNA by the elongation apparatus. The sequence is that of Methionyl-tRNA formyltransferase from Xylella fastidiosa (strain 9a5c).